The chain runs to 119 residues: MSRRNQAVGAYGERCALQHLITAGMRPVERNWRCPHGEIDIIAWDGPVLAICEVKTRRTDTFGAPAAAVTGPKARRLRVLAAQWLAETGTRADEVRFDVLSVRVTAAGPPRIEHLKGAF.

Belongs to the UPF0102 family.

This is UPF0102 protein Sare_1228 from Salinispora arenicola (strain CNS-205).